The primary structure comprises 176 residues: uncharacterized protein (176 aa).

This is an uncharacterized protein from Schizosaccharomyces pombe (strain 972 / ATCC 24843) (Fission yeast).